The sequence spans 133 residues: Homeobox protein BarH-like 2 (133 aa).

A DNA-binding region (homeobox) is located at residues 1–46; the sequence is ELEKEFQKQKYLSTPDRLDLAQSLGLTQLQVKTWYQNRRMKWKKMV. Residues 45-133 are disordered; it reads MVLKGGQEAP…VTSPEPPPSS (89 aa).

Belongs to the BAR homeobox family. In terms of tissue distribution, expressed in keratinizing epithelia such as wool follicle, tongue and esophagus. Expressed at low level in thymus. Not detected in spleen, skeletal muscle, brain, heart kidney, liver and lung.

The protein resides in the nucleus. In terms of biological role, transcription factor. Binds optimally to the DNA consensus sequence 5'-YYTAATGRTTTTY-3'. May control the expression of neural adhesion molecules such as L1 or Ng-CAM during embryonic development of both the central and peripherical nervous system. May be involved in controlling adhesive processes in keratinizing epithelia. In Ovis aries (Sheep), this protein is Homeobox protein BarH-like 2 (BARX2).